A 209-amino-acid chain; its full sequence is Potassium-transporting ATPase KdpC subunit (209 aa).

The chain crosses the membrane as a helical span at residues 11-31 (MILALTVLTGLAYPLAVTAVA). The disordered stretch occupies residues 188–209 (AQAPTPRQPEPGHPEPGRPEVR). The span at 197-209 (EPGHPEPGRPEVR) shows a compositional bias: basic and acidic residues.

This sequence belongs to the KdpC family. In terms of assembly, the system is composed of three essential subunits: KdpA, KdpB and KdpC.

It is found in the cell inner membrane. In terms of biological role, part of the high-affinity ATP-driven potassium transport (or Kdp) system, which catalyzes the hydrolysis of ATP coupled with the electrogenic transport of potassium into the cytoplasm. This subunit acts as a catalytic chaperone that increases the ATP-binding affinity of the ATP-hydrolyzing subunit KdpB by the formation of a transient KdpB/KdpC/ATP ternary complex. This is Potassium-transporting ATPase KdpC subunit from Rhodospirillum centenum (strain ATCC 51521 / SW).